We begin with the raw amino-acid sequence, 430 residues long: Delta-aminolevulinic acid dehydratase 1, chloroplastic (430 aa).

The N-terminal 52 residues, methionine 1–arginine 52, are a transit peptide targeting the chloroplast. Residues glutamate 82 to alanine 91 show a composition bias toward pro residues. Residues glutamate 82 to proline 101 are disordered. Residue lysine 298 is the Schiff-base intermediate with substrate of the active site. Residues arginine 308 and lysine 320 each coordinate 5-aminolevulinate. Glutamate 336 is a Mg(2+) binding site. Lysine 351 (schiff-base intermediate with substrate) is an active-site residue. Positions 377 and 416 each coordinate 5-aminolevulinate.

This sequence belongs to the ALAD family. Homooctamer. It depends on Mg(2+) as a cofactor. As to expression, highly expressed in cotyledons during dark-to-light transition.

It localises to the plastid. It is found in the chloroplast. It carries out the reaction 2 5-aminolevulinate = porphobilinogen + 2 H2O + H(+). The protein operates within porphyrin-containing compound metabolism; protoporphyrin-IX biosynthesis; coproporphyrinogen-III from 5-aminolevulinate: step 1/4. Its pathway is porphyrin-containing compound metabolism; chlorophyll biosynthesis. In terms of biological role, catalyzes an early step in the biosynthesis of tetrapyrroles. Binds two molecules of 5-aminolevulinate per subunit, each at a distinct site, and catalyzes their condensation to form porphobilinogen. In Arabidopsis thaliana (Mouse-ear cress), this protein is Delta-aminolevulinic acid dehydratase 1, chloroplastic (HEMB1).